We begin with the raw amino-acid sequence, 521 residues long: Probable feruloyl esterase B-2 (521 aa).

The first 19 residues, 1 to 19 (MKVSLWLTLLGVNLSLALA), serve as a signal peptide directing secretion. 5 N-linked (GlcNAc...) asparagine glycosylation sites follow: Asn13, Asn53, Asn85, Asn98, and Asn138. 2 disulfide bridges follow: Cys28–Cys75 and Cys63–Cys114. Intrachain disulfides connect Cys187/Cys440, Cys257/Cys274, Cys283/Cys291, and Cys506/Cys520. Ser188 (acyl-ester intermediate) is an active-site residue. N-linked (GlcNAc...) asparagine glycosylation occurs at Asn235. Positions 258, 261, 263, 265, and 267 each coordinate Ca(2+). The Charge relay system role is filled by Asp399. Residue Asn419 is glycosylated (N-linked (GlcNAc...) asparagine). Residue His439 is the Charge relay system of the active site.

It belongs to the tannase family.

The protein resides in the secreted. The catalysed reaction is feruloyl-polysaccharide + H2O = ferulate + polysaccharide.. In terms of biological role, involved in degradation of plant cell walls. Hydrolyzes the feruloyl-arabinose ester bond in arabinoxylans as well as the feruloyl-galactose and feruloyl-arabinose ester bonds in pectin. The protein is Probable feruloyl esterase B-2 (faeB-2) of Aspergillus flavus (strain ATCC 200026 / FGSC A1120 / IAM 13836 / NRRL 3357 / JCM 12722 / SRRC 167).